Here is a 222-residue protein sequence, read N- to C-terminus: Ras-related protein Rab11C (222 aa).

22–29 (GDSAVGKT) is a binding site for GTP. Positions 44-52 (SKATIGVEF) match the Effector region motif. Residues 70–74 (DTAGQ) and 128–131 (NKTD) each bind GTP. Residues C219 and C220 are each lipidated (S-geranylgeranyl cysteine).

It belongs to the small GTPase superfamily. Rab family.

The protein localises to the cell membrane. The chain is Ras-related protein Rab11C (RAB11C) from Nicotiana tabacum (Common tobacco).